A 144-amino-acid polypeptide reads, in one-letter code: Transcription antitermination protein NusB (144 aa).

It belongs to the NusB family.

Its function is as follows. Involved in transcription antitermination. Required for transcription of ribosomal RNA (rRNA) genes. Binds specifically to the boxA antiterminator sequence of the ribosomal RNA (rrn) operons. The protein is Transcription antitermination protein NusB of Paraburkholderia xenovorans (strain LB400).